The chain runs to 701 residues: Heterodisulfide reductase subunit A-like protein (701 aa).

152–175 (GGGIAGIFAALDIANAGYKVYLVE) is a binding site for FAD. Residues 239–268 (KQTWVDWDLCTGCGACTDVCPPKARVPDEF) enclose the 4Fe-4S ferredoxin-type 1 domain. The [4Fe-4S] cluster site is built by cysteine 248, cysteine 251, cysteine 254, cysteine 326, cysteine 627, cysteine 630, cysteine 633, cysteine 637, cysteine 660, cysteine 663, cysteine 666, and cysteine 670. 4Fe-4S ferredoxin-type domains follow at residues 618-647 (LVSE…MTKY) and 651-680 (MRAE…LHGF).

It belongs to the HdrA family. As to quaternary structure, the heterodisulfide reductase is composed of three subunits; HdlA, HdlB and HdlC. It forms a complex with the F420-non-reducing hydrogenase (Mvh), which provides the reducing equivalents to the heterodisulfide reductase. [4Fe-4S] cluster serves as cofactor. It depends on FAD as a cofactor.

It is found in the cytoplasm. Functionally, has oxidoreductase activity. The Hdl and Mvh subunits may together mediate electron transfer from hydrogen to an unidentified electron acceptor on the cytoplasmic side of the membrane. The chain is Heterodisulfide reductase subunit A-like protein (hdlA) from Archaeoglobus profundus (strain DSM 5631 / JCM 9629 / NBRC 100127 / Av18).